The sequence spans 1143 residues: Major DNA-binding protein (1143 aa).

Positions 1140–1143 are required for nuclear localization; it reads RMRL.

It belongs to the herpesviridae major DNA-binding protein family. Homooligomers. Forms double-helical filaments necessary for the formation of replication compartments within the host nucleus. Interacts with the origin-binding protein. Interacts with the helicase primase complex; this interaction stimulates primer synthesis activity of the helicase-primase complex. Interacts with the DNA polymerase. Interacts with the alkaline exonuclease; this interaction increases its nuclease processivity.

The protein localises to the host nucleus. In terms of biological role, plays several crucial roles in viral infection. Participates in the opening of the viral DNA origin to initiate replication by interacting with the origin-binding protein. May disrupt loops, hairpins and other secondary structures present on ssDNA to reduce and eliminate pausing of viral DNA polymerase at specific sites during elongation. Promotes viral DNA recombination by performing strand-transfer, characterized by the ability to transfer a DNA strand from a linear duplex to a complementary single-stranded DNA circle. Can also catalyze the renaturation of complementary single strands. Additionally, reorganizes the host cell nucleus, leading to the formation of prereplicative sites and replication compartments. This process is driven by the protein which can form double-helical filaments in the absence of DNA. The protein is Major DNA-binding protein of Elephantid herpesvirus 1 (isolate Asian elephant/Berlin/Kiba/1998) (EIHV-1).